Consider the following 540-residue polypeptide: CTP synthase (540 aa).

Residues 1-270 (MNNLTSTKFI…DTQILKHFNI (270 aa)) form an amidoligase domain region. Serine 18 contacts CTP. UTP is bound at residue serine 18. ATP-binding positions include 19–24 (SLGKGL) and aspartate 76. Aspartate 76 and glutamate 144 together coordinate Mg(2+). CTP is bound by residues 151 to 153 (DIE), 191 to 196 (KTKPTQ), and lysine 227. Residues 191 to 196 (KTKPTQ) and lysine 227 contribute to the UTP site. The Glutamine amidotransferase type-1 domain occupies 295–537 (TIAIIGKYIK…VQASLNYQET (243 aa)). Position 356 (glycine 356) interacts with L-glutamine. Cysteine 383 acts as the Nucleophile; for glutamine hydrolysis in catalysis. L-glutamine is bound by residues 384–387 (MGMQ), glutamate 407, and arginine 462. Active-site residues include histidine 510 and glutamate 512.

This sequence belongs to the CTP synthase family. Homotetramer.

The enzyme catalyses UTP + L-glutamine + ATP + H2O = CTP + L-glutamate + ADP + phosphate + 2 H(+). It catalyses the reaction L-glutamine + H2O = L-glutamate + NH4(+). The catalysed reaction is UTP + NH4(+) + ATP = CTP + ADP + phosphate + 2 H(+). The protein operates within pyrimidine metabolism; CTP biosynthesis via de novo pathway; CTP from UDP: step 2/2. Its activity is regulated as follows. Allosterically activated by GTP, when glutamine is the substrate; GTP has no effect on the reaction when ammonia is the substrate. The allosteric effector GTP functions by stabilizing the protein conformation that binds the tetrahedral intermediate(s) formed during glutamine hydrolysis. Inhibited by the product CTP, via allosteric rather than competitive inhibition. Functionally, catalyzes the ATP-dependent amination of UTP to CTP with either L-glutamine or ammonia as the source of nitrogen. Regulates intracellular CTP levels through interactions with the four ribonucleotide triphosphates. The protein is CTP synthase of Ehrlichia ruminantium (strain Welgevonden).